The following is a 438-amino-acid chain: C4-dicarboxylate transport protein 1 (438 aa).

The next 8 membrane-spanning stretches (helical) occupy residues 20–42 (LYVQVLIAILIGAMVGCLWPSVA), 57–77 (LIKMVIAPIIFCTVTSGIAHI), 90–112 (ALFYFEIVSSFALLLGLAMGNLV), 160–179 (VLQVLLFAILFGFSLMALGK), 192–214 (AHAVFGVIAIVMKAAPIGAFGAM), 229–251 (LIGLIALFYVTAALFVVVVLGLI), 324–346 (LFIAQALGVDLSFGQQLTILLVA), and 361–383 (FITLAATLSVVNPALVPGMAIVF).

It belongs to the dicarboxylate/amino acid:cation symporter (DAACS) (TC 2.A.23) family.

Its subcellular location is the cell inner membrane. Responsible for the transport of dicarboxylates such as succinate, fumarate, and malate from the periplasm across the membrane. The chain is C4-dicarboxylate transport protein 1 from Bradyrhizobium diazoefficiens (strain JCM 10833 / BCRC 13528 / IAM 13628 / NBRC 14792 / USDA 110).